Consider the following 277-residue polypeptide: Caspase-3 (277 aa).

The residue at position 1 (methionine 1) is an N-acetylmethionine. 2 consecutive propeptides follow at residues 1–9 and 10–28; these read MENNETSVD and SKSI…KSMD. N6-acetyllysine is present on lysine 11. At serine 26 the chain carries Phosphoserine. Active-site residues include histidine 121 and cysteine 163. An S-nitrosocysteine; in inhibited form modification is found at cysteine 163.

The protein belongs to the peptidase C14A family. In terms of assembly, heterotetramer that consists of two anti-parallel arranged heterodimers, each one formed by a 17 kDa (p17) and a 12 kDa (p12) subunit. Interacts with BIRC6/bruce. In terms of processing, cleavage by granzyme B, caspase-6, caspase-8 and caspase-10 generates the two active subunits. Additional processing of the propeptides is likely due to the autocatalytic activity of the activated protease. Active heterodimers between the small subunit of caspase-7 protease and the large subunit of caspase-3 also occur and vice versa. S-nitrosylated on its catalytic site cysteine in unstimulated cell lines and denitrosylated upon activation of the Fas apoptotic pathway, associated with an increase in intracellular caspase activity. Fas therefore activates caspase-3 not only by inducing the cleavage of the caspase zymogen to its active subunits, but also by stimulating the denitrosylation of its active site thiol. Post-translationally, ubiquitinated by BIRC6; this activity is inhibited by DIABLO/SMAC.

Its subcellular location is the cytoplasm. It catalyses the reaction Strict requirement for an Asp residue at positions P1 and P4. It has a preferred cleavage sequence of Asp-Xaa-Xaa-Asp-|- with a hydrophobic amino-acid residue at P2 and a hydrophilic amino-acid residue at P3, although Val or Ala are also accepted at this position.. Inhibited by BIRC6; following inhibition of BIRC6-caspase binding by DIABLO/SMAC, BIRC6 is subjected to caspase cleavage, leading to an increase in active caspases. In terms of biological role, involved in the activation cascade of caspases responsible for apoptosis execution. At the onset of apoptosis, it proteolytically cleaves poly(ADP-ribose) polymerase PARP1 at a '216-Asp-|-Gly-217' bond. Cleaves and activates sterol regulatory element binding proteins (SREBPs) between the basic helix-loop-helix leucine zipper domain and the membrane attachment domain. Cleaves and activates caspase-6, -7 and -9 (CASP6, CASP7 and CASP9, respectively). Cleaves and inactivates interleukin-18 (IL18). Triggers cell adhesion in sympathetic neurons through RET cleavage. Cleaves IL-1 beta between an Asp and an Ala, releasing the mature cytokine which is involved in a variety of inflammatory processes. Cleaves and inhibits serine/threonine-protein kinase AKT1 in response to oxidative stress. Acts as an inhibitor of type I interferon production during virus-induced apoptosis by mediating cleavage of antiviral proteins CGAS, IRF3 and MAVS, thereby preventing cytokine overproduction. Also involved in pyroptosis by mediating cleavage and activation of gasdermin-E (GSDME). Cleaves XRCC4 and phospholipid scramblase proteins XKR4, XKR8 and XKR9, leading to promote phosphatidylserine exposure on apoptotic cell surface. Cleaves BIRC6 following inhibition of BIRC6-caspase binding by DIABLO/SMAC. The sequence is that of Caspase-3 (CASP3) from Mesocricetus auratus (Golden hamster).